The sequence spans 412 residues: Solute carrier family 22 member 18 (412 aa).

The next 10 membrane-spanning stretches (helical) occupy residues 16–36 (GIII…FMQF), 51–71 (VSFG…GPVF), 117–137 (LPAA…DLTA), 148–168 (LGLC…TLST), 176–196 (AFLA…CIPV), 232–252 (FLVK…FSII), 264–284 (AGYL…LVIG), 294–314 (ALLR…ALMS), 316–336 (VFHF…LNIV), and 380–400 (GVSI…LVLW).

The protein belongs to the major facilitator (TC 2.A.1) superfamily. Organic cation transporter (TC 2.A.1.19) family.

It localises to the apical cell membrane. Its function is as follows. May act as a transporter of organic cations based on a proton efflux antiport mechanism. May play a role in the transport of chloroquine and quinidine-related compounds in kidney. Plays a role in the regulation of lipid metabolism. This chain is Solute carrier family 22 member 18 (Slc67a1), found in Rattus norvegicus (Rat).